The primary structure comprises 232 residues: UPF0758 protein EF_2926 (232 aa).

Positions 107 to 229 (KVTSSQQVAQ…YISLREENFF (123 aa)) constitute an MPN domain. Zn(2+) is bound by residues histidine 178, histidine 180, and aspartate 191. The JAMM motif motif lies at 178 to 191 (HNHPSGNPTPSPQD).

This sequence belongs to the UPF0758 family.

The chain is UPF0758 protein EF_2926 from Enterococcus faecalis (strain ATCC 700802 / V583).